Here is a 412-residue protein sequence, read N- to C-terminus: Probable serine/threonine-protein kinase PBL10 (412 aa).

The N-myristoyl glycine moiety is linked to residue G2. C4 carries S-palmitoyl cysteine lipidation. The disordered stretch occupies residues 15 to 45 (GASPKYMSSEANDSLGSKSSSVSIRTNPRTE). Polar residues predominate over residues 23–43 (SEANDSLGSKSSSVSIRTNPR). Position 58 is a phosphothreonine (T58). The Protein kinase domain maps to 69-356 (FRPDSVLGEG…VVSHLEHIQT (288 aa)). Residues 75 to 83 (LGEGGFGSV) and K107 contribute to the ATP site. Y152 carries the post-translational modification Phosphotyrosine. Residue D204 is the Proton acceptor of the active site. Residues S208 and S238 each carry the phosphoserine modification. Phosphothreonine occurs at positions 239 and 244. Y252 is modified (phosphotyrosine).

It belongs to the protein kinase superfamily. Ser/Thr protein kinase family. Interacts with the Xanthomonas campestris effector XopAC/AvrAC. Expressed in stomatal guard cells of leaves.

It localises to the cell membrane. It carries out the reaction L-seryl-[protein] + ATP = O-phospho-L-seryl-[protein] + ADP + H(+). The catalysed reaction is L-threonyl-[protein] + ATP = O-phospho-L-threonyl-[protein] + ADP + H(+). Functionally, possible bi-functional kinase. In vitro, it exhibits serine/threonine activity. In vivo, can phosphorylate tyrosine residues of limited substrates. May be involved in plant defense signaling. Required for full light-induced stomatal opening. This is Probable serine/threonine-protein kinase PBL10 from Arabidopsis thaliana (Mouse-ear cress).